The chain runs to 159 residues: NADH-quinone oxidoreductase subunit I (159 aa).

2 4Fe-4S ferredoxin-type domains span residues 51–80 (RRYE…IESD) and 90–119 (TRYD…EGPN). The [4Fe-4S] cluster site is built by Cys60, Cys63, Cys66, Cys70, Cys99, Cys102, Cys105, and Cys109.

The protein belongs to the complex I 23 kDa subunit family. NDH-1 is composed of 14 different subunits. Subunits NuoA, H, J, K, L, M, N constitute the membrane sector of the complex. It depends on [4Fe-4S] cluster as a cofactor.

It localises to the cell inner membrane. It carries out the reaction a quinone + NADH + 5 H(+)(in) = a quinol + NAD(+) + 4 H(+)(out). NDH-1 shuttles electrons from NADH, via FMN and iron-sulfur (Fe-S) centers, to quinones in the respiratory chain. The immediate electron acceptor for the enzyme in this species is believed to be ubiquinone. Couples the redox reaction to proton translocation (for every two electrons transferred, four hydrogen ions are translocated across the cytoplasmic membrane), and thus conserves the redox energy in a proton gradient. The protein is NADH-quinone oxidoreductase subunit I of Rickettsia prowazekii (strain Madrid E).